Reading from the N-terminus, the 566-residue chain is E3 ubiquitin-protein ligase RNF220 (566 aa).

Residue Lys277 forms a Glycyl lysine isopeptide (Lys-Gly) (interchain with G-Cter in SUMO2) linkage. Positions 277–297 (KREGESPTASPHSSATDDLHH) are disordered. At Ser390 the chain carries Phosphoserine. A coiled-coil region spans residues 485 to 513 (EDSAVTTFEALKARVRELERQLSRGDRYK). A required for targeting to the cytoplasm region spans residues 514–522 (CLICMDSYS). Residues 514 to 553 (CLICMDSYSMPLTSIQCWHVHCEECWLRTLGAKKLCPQCN) form an RING-type zinc finger.

In terms of assembly, interacts with SIN3B. Interacts with CTNNB1 (via Armadillo repeats 2-8). Interacts with USP7 (via MATH domain). Post-translationally, auto-ubiquitinated; leads to proteasomal degradation. As to expression, ubiquitously expressed. Abundant in brain and spinal cord, particularly in the cerebellum and cerebral cortex. In fetal tissues expressed in the cerebellum, spinal cord and cortex.

The protein localises to the cytoplasm. The protein resides in the nucleus. The enzyme catalyses S-ubiquitinyl-[E2 ubiquitin-conjugating enzyme]-L-cysteine + [acceptor protein]-L-lysine = [E2 ubiquitin-conjugating enzyme]-L-cysteine + N(6)-ubiquitinyl-[acceptor protein]-L-lysine.. The protein operates within protein modification; protein ubiquitination. Its function is as follows. E3 ubiquitin-protein ligase that promotes the ubiquitination and proteasomal degradation of SIN3B. Independently of its E3 ligase activity, acts as a CTNNB1 stabilizer through USP7-mediated deubiquitination of CTNNB1 promoting Wnt signaling. Plays a critical role in the regulation of nuclear lamina. In Homo sapiens (Human), this protein is E3 ubiquitin-protein ligase RNF220 (RNF220).